The sequence spans 582 residues: SHC-transforming protein 2 (582 aa).

Disordered regions lie at residues 1–24 and 47–70; these read MTQGPGGRAPPAPPAPPEPEAPTT and GPAAARAAGASGGADPQPEPAGPG. The segment covering 8-20 has biased composition (pro residues); the sequence is RAPPAPPAPPEPE. Residues 147–329 enclose the PID domain; it reads LGPGVSYVVR…AGPEESAWGD (183 aa). Residues 330–486 are CH1; the sequence is EEDSLEHNYY…PTEEQLRQEP (157 aa). Phosphotyrosine occurs at positions 338, 339, and 414. The tract at residues 460 to 481 is disordered; sequence PLEDQWPSPPTRRAPVAPTEEQ. Positions 487-578 constitute an SH2 domain; that stretch reads WYHGRMSRRA…ESELHLRGVV (92 aa).

As to quaternary structure, interacts with the Trk receptors in a phosphotyrosine-dependent manner and MEGF12. Once activated, binds to GRB2. Phosphorylated on tyrosines by the Trk receptors. As to expression, expressed in brain. Expressed at high level in the hypothalamus and at low level in the caudate nucleus.

Functionally, signaling adapter that couples activated growth factor receptors to signaling pathway in neurons. Involved in the signal transduction pathways of neurotrophin-activated Trk receptors in cortical neurons. The sequence is that of SHC-transforming protein 2 (SHC2) from Homo sapiens (Human).